The sequence spans 106 residues: ATP-dependent Clp protease adapter protein ClpS (106 aa).

This sequence belongs to the ClpS family. In terms of assembly, binds to the N-terminal domain of the chaperone ClpA.

Functionally, involved in the modulation of the specificity of the ClpAP-mediated ATP-dependent protein degradation. This is ATP-dependent Clp protease adapter protein ClpS from Vibrio cholerae serotype O1 (strain ATCC 39541 / Classical Ogawa 395 / O395).